The sequence spans 106 residues: ATP-dependent Clp protease adapter protein ClpS (106 aa).

This sequence belongs to the ClpS family. As to quaternary structure, binds to the N-terminal domain of the chaperone ClpA.

Functionally, involved in the modulation of the specificity of the ClpAP-mediated ATP-dependent protein degradation. The polypeptide is ATP-dependent Clp protease adapter protein ClpS (Yersinia pestis bv. Antiqua (strain Antiqua)).